The sequence spans 248 residues: Probable phosphatase VFMJ11_A0091 (248 aa).

Zn(2+) is bound by residues H8, H10, H16, H41, E74, H102, H132, D194, and H196.

Belongs to the PHP family. Requires Zn(2+) as cofactor.

The protein is Probable phosphatase VFMJ11_A0091 of Aliivibrio fischeri (strain MJ11) (Vibrio fischeri).